Reading from the N-terminus, the 155-residue chain is 6,7-dimethyl-8-ribityllumazine synthase (155 aa).

5-amino-6-(D-ribitylamino)uracil is bound by residues Trp23, 57–59 (AWE), and 81–83 (CVI). (2S)-2-hydroxy-3-oxobutyl phosphate is bound at residue 86 to 87 (DT). The Proton donor role is filled by His89. Asn114 contributes to the 5-amino-6-(D-ribitylamino)uracil binding site. Residue Arg128 participates in (2S)-2-hydroxy-3-oxobutyl phosphate binding.

The protein belongs to the DMRL synthase family. Forms an icosahedral capsid composed of 60 subunits, arranged as a dodecamer of pentamers.

The catalysed reaction is (2S)-2-hydroxy-3-oxobutyl phosphate + 5-amino-6-(D-ribitylamino)uracil = 6,7-dimethyl-8-(1-D-ribityl)lumazine + phosphate + 2 H2O + H(+). It functions in the pathway cofactor biosynthesis; riboflavin biosynthesis; riboflavin from 2-hydroxy-3-oxobutyl phosphate and 5-amino-6-(D-ribitylamino)uracil: step 1/2. Its function is as follows. Catalyzes the formation of 6,7-dimethyl-8-ribityllumazine by condensation of 5-amino-6-(D-ribitylamino)uracil with 3,4-dihydroxy-2-butanone 4-phosphate. This is the penultimate step in the biosynthesis of riboflavin. This is 6,7-dimethyl-8-ribityllumazine synthase from Stenotrophomonas maltophilia (strain K279a).